A 654-amino-acid chain; its full sequence is Import motor subunit, mitochondrial (654 aa).

The N-terminal 23 residues, 1-23, are a transit peptide targeting the mitochondrion; it reads MLAAKNILNRSSLSSSFRIATRL. The residue at position 330 (Thr330) is a Phosphothreonine. A disordered region spans residues 629–654; sequence EQLYKNDSNNNNNNNGNNAESGETKQ. Over residues 637–646 the composition is skewed to low complexity; that stretch reads NNNNNNNGNN.

Belongs to the heat shock protein 70 family. As to quaternary structure, component of the PAM complex, at least composed of SSC1 (mtHsp70), MGE1, TIM44, PAM16/TIM16, PAM17 and PAM18/TIM14. In the complex, SSC1 interacts directly with PAM18 and TIM44. Interacts with NAP1.

It localises to the mitochondrion matrix. The catalysed reaction is ATP + H2O = ADP + phosphate + H(+). Functionally, essential component of the PAM complex, a complex required for the translocation of transit peptide-containing proteins from the inner membrane into the mitochondrial matrix in an ATP-dependent manner. Constitutes the ATP-driven core of the motor and binds the precursor preprotein. Required for the import of the processed frataxin homolog YFH1 into the mitochondrion. The protein is Import motor subunit, mitochondrial of Saccharomyces cerevisiae (strain ATCC 204508 / S288c) (Baker's yeast).